We begin with the raw amino-acid sequence, 430 residues long: Glutamate-1-semialdehyde 2,1-aminomutase (430 aa).

Lys265 is subject to N6-(pyridoxal phosphate)lysine.

Belongs to the class-III pyridoxal-phosphate-dependent aminotransferase family. HemL subfamily. As to quaternary structure, homodimer. Pyridoxal 5'-phosphate serves as cofactor.

The protein localises to the cytoplasm. It catalyses the reaction (S)-4-amino-5-oxopentanoate = 5-aminolevulinate. The protein operates within porphyrin-containing compound metabolism; protoporphyrin-IX biosynthesis; 5-aminolevulinate from L-glutamyl-tRNA(Glu): step 2/2. The sequence is that of Glutamate-1-semialdehyde 2,1-aminomutase from Shewanella baltica (strain OS155 / ATCC BAA-1091).